A 346-amino-acid polypeptide reads, in one-letter code: Cytochrome c551 peroxidase (346 aa).

A signal peptide spans 1–23; the sequence is MQSSQLLPLGSLLLSFATPLAQA. Residues cysteine 74, cysteine 77, histidine 78, cysteine 220, cysteine 223, histidine 224, histidine 284, and methionine 298 each contribute to the heme c site.

It depends on heme c as a cofactor. Post-translationally, binds 2 heme groups per subunit. Sequencing of the whole protein indicates about 20% starts on Val-247.

The protein localises to the periplasm. It catalyses the reaction 2 Fe(II)-[cytochrome c] + H2O2 + 2 H(+) = 2 Fe(III)-[cytochrome c] + 2 H2O. Its function is as follows. Catalyzes the peroxidative oxidation of azurin and cytochrome c551. Likely to provide protection against toxic peroxides. The polypeptide is Cytochrome c551 peroxidase (ccpA) (Pseudomonas aeruginosa (strain ATCC 15692 / DSM 22644 / CIP 104116 / JCM 14847 / LMG 12228 / 1C / PRS 101 / PAO1)).